A 369-amino-acid chain; its full sequence is Secondary metabolism regulator laeA (369 aa).

Residues 1–37 (MFGNGQTGQRLPAMASPPHDSYYSQSLASSRSRNNSD) form a disordered region. Over residues 20-37 (DSYYSQSLASSRSRNNSD) the composition is skewed to low complexity.

This sequence belongs to the methyltransferase superfamily. LaeA methyltransferase family. As to quaternary structure, component of the heterotrimeric velvet complex composed of laeA, veA and velB; VeA acting as a bridging protein between laeA and velB. Interacts directly with veA.

The protein localises to the nucleus. The catalysed reaction is L-methionyl-[protein] + S-adenosyl-L-methionine = S-methyl-L-methionyl-[protein] + S-adenosyl-L-homocysteine. In terms of biological role, methyltransferase that performs automethylation. No other methyl-accepting substrate has been identified yet. Component of the velvet transcription factor complex that acts as a global regulator for secondary metabolite gene expression. Required for aflR expression and subsequent aflatoxin production. Negatively regulates veA expression. Controls conidiophore and conidial development. Required for hydrophobin production which plays a role in cell surface hydrophobicity and host defense escape. The sequence is that of Secondary metabolism regulator laeA from Aspergillus flavus (strain ATCC 200026 / FGSC A1120 / IAM 13836 / NRRL 3357 / JCM 12722 / SRRC 167).